The following is a 341-amino-acid chain: L-sulfolactate dehydrogenase (341 aa).

The protein belongs to the LDH2/MDH2 oxidoreductase family.

The protein resides in the cytoplasm. The catalysed reaction is a (2S)-2-hydroxycarboxylate + NAD(+) = a 2-oxocarboxylate + NADH + H(+). The protein operates within cofactor biosynthesis; coenzyme M biosynthesis; sulfoacetaldehyde from phosphoenolpyruvate and sulfite: step 3/4. Its pathway is cofactor biosynthesis; 5,6,7,8-tetrahydromethanopterin biosynthesis. Catalyzes the reduction of sulfopyruvate to (R)-sulfolactate. Involved in the biosynthesis of both coenzyme M (with (R)-sulfolactate) and methanopterin (with alpha-ketoglutarate). This is L-sulfolactate dehydrogenase (comC) from Methanothermobacter thermautotrophicus (strain ATCC 29096 / DSM 1053 / JCM 10044 / NBRC 100330 / Delta H) (Methanobacterium thermoautotrophicum).